Here is a 179-residue protein sequence, read N- to C-terminus: Nucleoside-triphosphatase THEP1 (179 aa).

Residues 7–14 (GRPGVGKT) and 94–101 (LIIVDEIG) each bind ATP.

Belongs to the THEP1 NTPase family.

The enzyme catalyses a ribonucleoside 5'-triphosphate + H2O = a ribonucleoside 5'-diphosphate + phosphate + H(+). Has nucleotide phosphatase activity towards ATP, GTP, CTP, TTP and UTP. May hydrolyze nucleoside diphosphates with lower efficiency. The chain is Nucleoside-triphosphatase THEP1 from Thermotoga petrophila (strain ATCC BAA-488 / DSM 13995 / JCM 10881 / RKU-1).